The primary structure comprises 418 residues: Pyruvate kinase isozyme G, chloroplastic (418 aa).

K(+) is bound by residues D14 and T15. R21 contributes to the ATP binding site. E165 is a Mg(2+) binding site. 3 residues coordinate substrate: G188, D189, and T221. Position 189 (D189) interacts with Mg(2+).

This sequence belongs to the pyruvate kinase family. Mg(2+) serves as cofactor. K(+) is required as a cofactor. In terms of tissue distribution, expressed in developing and germinating endosperm and in roots.

It is found in the plastid. The protein localises to the chloroplast. It carries out the reaction pyruvate + ATP = phosphoenolpyruvate + ADP + H(+). The protein operates within carbohydrate degradation; glycolysis; pyruvate from D-glyceraldehyde 3-phosphate: step 5/5. In Ricinus communis (Castor bean), this protein is Pyruvate kinase isozyme G, chloroplastic.